The primary structure comprises 294 residues: Thymidylate synthase 1/2 (294 aa).

DUMP-binding positions include Arg29 and 154–155; that span reads RR. Cys174 functions as the Nucleophile in the catalytic mechanism. Residues 194-197, Asn205, and 235-237 contribute to the dUMP site; these read RSGD and HVY. A (6R)-5,10-methylene-5,6,7,8-tetrahydrofolate-binding site is contributed by Asp197.

The protein belongs to the thymidylate synthase family.

It catalyses the reaction dUMP + (6R)-5,10-methylene-5,6,7,8-tetrahydrofolate = 7,8-dihydrofolate + dTMP. Its pathway is pyrimidine metabolism; dTTP biosynthesis. The sequence is that of Thymidylate synthase 1/2 (TS-1) from Encephalitozoon cuniculi (strain GB-M1) (Microsporidian parasite).